Reading from the N-terminus, the 267-residue chain is Hydroxypyruvate/pyruvate aldolase Bphyt_5830 (267 aa).

Residue histidine 48 is the Proton acceptor of the active site. Glutamate 152 and aspartate 178 together coordinate a divalent metal cation.

The protein belongs to the HpcH/HpaI aldolase family. Requires a divalent metal cation as cofactor.

It catalyses the reaction D-glyceraldehyde + 3-hydroxypyruvate = 2-dehydro-D-galactonate. The catalysed reaction is D-glyceraldehyde + 3-hydroxypyruvate = (3R,4S,5R)-3,4,5,6-tetrahydroxy-2-oxohexanoate. It carries out the reaction D-glyceraldehyde + pyruvate = 2-dehydro-3-deoxy-L-galactonate. Aldolase which can catalyze in vitro the aldolisation reaction between hydroxypyruvate (HPA) or pyruvate (PA) and D-glyceraldehyde (D-GA). The condensation of hydroxypyruvate and D-glyceraldehyde produces 2-dehydro-D-galactonate as the major product and (3R,4S,5R)-3,4,5,6-tetrahydroxy-2-oxohexanoate. The condensation of pyruvate and D-glyceraldehyde produces 2-dehydro-3-deoxy-L-galactonate. This Paraburkholderia phytofirmans (strain DSM 17436 / LMG 22146 / PsJN) (Burkholderia phytofirmans) protein is Hydroxypyruvate/pyruvate aldolase Bphyt_5830.